A 340-amino-acid chain; its full sequence is Adenosine deaminase (340 aa).

2 residues coordinate Zn(2+): His-15 and His-17. His-17, Asp-19, and Gly-172 together coordinate substrate. Position 199 (His-199) interacts with Zn(2+). Residue Glu-202 is the Proton donor of the active site. Asp-279 lines the Zn(2+) pocket.

Belongs to the metallo-dependent hydrolases superfamily. Adenosine and AMP deaminases family. Adenosine deaminase subfamily. The cofactor is Zn(2+).

It carries out the reaction adenosine + H2O + H(+) = inosine + NH4(+). It catalyses the reaction 2'-deoxyadenosine + H2O + H(+) = 2'-deoxyinosine + NH4(+). Catalyzes the hydrolytic deamination of adenosine and 2-deoxyadenosine. The sequence is that of Adenosine deaminase from Streptococcus agalactiae serotype Ia (strain ATCC 27591 / A909 / CDC SS700).